A 395-amino-acid polypeptide reads, in one-letter code: Serine/threonine-protein kinase BIK1 (395 aa).

Gly-2 is lipidated: N-myristoyl glycine. Cys-4 carries S-palmitoyl cysteine lipidation. Ser-26 carries the post-translational modification Phosphoserine. Lys-31 is covalently cross-linked (Glycyl lysine isopeptide (Lys-Gly) (interchain with G-Cter in ubiquitin)). Phosphoserine is present on residues Ser-32, Ser-33, and Ser-34. Thr-35 carries the phosphothreonine modification. A Glycyl lysine isopeptide (Lys-Gly) (interchain with G-Cter in ubiquitin) cross-link involves residue Lys-41. Thr-42 carries the post-translational modification Phosphothreonine. A Phosphoserine; by autocatalysis and BAK1 modification is found at Ser-48. Thr-50 is subject to Phosphothreonine. Ser-54 bears the Phosphoserine; by autocatalysis mark. Residue Thr-56 is modified to Phosphothreonine; by autocatalysis. Position 64 is a phosphothreonine (Thr-64). A Protein kinase domain is found at 67–356 (FRPDSVIGEG…RALQQLQDNL (290 aa)). The residue at position 71 (Ser-71) is a Phosphoserine; by autocatalysis and BAK1. 73 to 81 (IGEGGFGCV) provides a ligand contact to ATP. Ser-89 carries the post-translational modification Phosphoserine; by EFR. A Required for physical interaction with and phosphorylation of downstream signaling proteins (e.g. WRKY33, WRKY50, WRKY51 and WRKY57) to activate EFR-mediated immune signaling motif is present at residues 89 to 90 (ST). Residue Thr-90 is modified to Phosphothreonine; by EFR. A Glycyl lysine isopeptide (Lys-Gly) (interchain with G-Cter in ubiquitin) cross-link involves residue Lys-95. Lys-105 serves as a coordination point for ATP. Phosphothreonine; by EFR is present on Thr-120. Ser-129 carries the post-translational modification Phosphoserine; by autocatalysis. A Phosphoserine; by EFR modification is found at Ser-129. Tyr-150 carries the post-translational modification Phosphotyrosine. Residue Tyr-168 is modified to Phosphotyrosine; by autocatalysis. Residues Lys-170 and Lys-186 each participate in a glycyl lysine isopeptide (Lys-Gly) (interchain with G-Cter in ubiquitin) cross-link. Ser-193 carries the phosphoserine modification. The active-site Proton acceptor is the Asp-202. Ser-206 bears the Phosphoserine; by autocatalysis and BAK1 mark. Position 214 is a phosphotyrosine; by autocatalysis (Tyr-214). The residue at position 219 (Ser-219) is a Phosphoserine. The residue at position 233 (Ser-233) is a Phosphoserine; by autocatalysis. Ser-236 is subject to O-UMP-serine; by Xanthomonas campestris effector XopAC/AvrAC; alternate. A Phosphoserine; by autocatalysis and BAK1; alternate modification is found at Ser-236. Position 237 is an O-UMP-threonine; by Xanthomonas campestris effector XopAC/AvrAC; alternate (Thr-237). Thr-237 carries the post-translational modification Phosphothreonine; by autocatalysis and BAK1; alternate. The residue at position 242 (Thr-242) is a Phosphothreonine; by autocatalysis and BAK1. The residue at position 243 (Tyr-243) is a Phosphotyrosine. A Phosphotyrosine; by autocatalysis modification is found at Tyr-250. Phosphoserine; by autocatalysis is present on residues Ser-252 and Ser-253. A Glycyl lysine isopeptide (Lys-Gly) (interchain with G-Cter in ubiquitin) cross-link involves residue Lys-286. Phosphothreonine; by autocatalysis is present on Thr-314. Lys-337 participates in a covalent cross-link: Glycyl lysine isopeptide (Lys-Gly) (interchain with G-Cter in ubiquitin). At Thr-341 the chain carries Phosphothreonine. The span at 354–365 (DNLGKPSQTNPV) shows a compositional bias: polar residues. Residues 354–395 (DNLGKPSQTNPVKDTKKLGFKTGTTKSSEKRFTQKPFGRHLV) form a disordered region. A Glycyl lysine isopeptide (Lys-Gly) (interchain with G-Cter in ubiquitin) cross-link involves residue Lys-358. Ser-360 carries the phosphoserine; by autocatalysis and BAK1 modification. At Thr-362 the chain carries Phosphothreonine; by autocatalysis and BAK1. Lys-366 is covalently cross-linked (Glycyl lysine isopeptide (Lys-Gly) (interchain with G-Cter in ubiquitin)). Position 368 is a phosphothreonine; by autocatalysis and BAK1 (Thr-368). A phosphothreonine mark is found at Thr-375 and Thr-377.

It belongs to the protein kinase superfamily. Ser/Thr protein kinase family. Interacts with FLS2. Activation of FLS2 by flagellin (flg22) induces the dissociation of the complex. Interacts with BAK1. Interacts with the Xanthomonas campestris effector XopAC/AvrAC. Interacts with CPK28. Interacts with PEPR1. Interacts with PP2C38. Interacts with BRI1. Interacts with RBOHD. Binds to EFR when not phosphorylated at Ser-89 and Thr-90, in the absence of pathogen elicitor; dissociates upon pathogen-associated molecular pattern (PAMP)-triggered activation by EFR-mediated phosphorylation. Interacts directly with and phosphorylates WRKY transcription factors in the nucleus involved in the jasmonic acid (JA) and salicylic acid (SA) regulation (e.g. WRKY33, WRKY50, WRKY51 and WRKY57) to modulate defense hormones during plant immunity. Binds to ATL44/RHA3A and ATL45/RHA3B. Binds to SIK1 to be phosphorylated and stabilized. In terms of processing, phosphorylated by SIK1 to be stabilized. Phosphorylated by FLS2 and BAK1. Autophosphorylated. Autophosphorylation is reduced in presence of the Xanthomonas campestris effector XopAC/AvrAC. Phosphorylated, especially by EFR at Ser-89 and Thr-90, in response to the microbe-associated molecular pattern (MAMP) flg22. Phosphorylation in response to flg22 is abolished in presence of the Xanthomonas campestris effector XopAC/AvrAC. Phosphorylated at Ser-233, Ser-236 and Thr-237 by PEPR1. Phosphorylated at Tyr-150, Tyr-243 and Tyr-250. Tyrosine phosphorylation is required for BIK1 function in plant innate immunity. Post-translationally, uridylylated at Ser-236 and Thr-237 by the Xanthomonas campestris effector XopAC/AvrAC. This conceals conserved phosphorylation sites in the activation loop, reducing BIK1 kinase activity and consequently inhibiting downstream signaling. Monoubiquitinated by ATL44/RHA3A and ATL45/RHA3B following phosphorylation upon the recognition of microbe-associated molecular patterns (MAMPs, e.g. flg22) by pattern recognition receptors (PRRs), then released from the FLS2/BAK1 complex and internalized dynamically into endocytic compartments followed by the activation of immune signaling.

The protein localises to the cell membrane. The protein resides in the endosome membrane. Its subcellular location is the nucleus. The enzyme catalyses L-seryl-[protein] + ATP = O-phospho-L-seryl-[protein] + ADP + H(+). It carries out the reaction L-threonyl-[protein] + ATP = O-phospho-L-threonyl-[protein] + ADP + H(+). Its activity is regulated as follows. Kinase activation is repressed by the phosphatase PP2C38. Its function is as follows. Plays a central role in immune responses. Required to activate the resistance responses to necrotrophic pathogens, including the regulation of defense hormone expression (e.g. jasmonic acid (JA) and salicylic acid (SA)). Phosphorylates FLS2 and BAK1. Involved in pathogen-associated molecular pattern (PAMP)-triggered immunity (PTI) signaling, including calcium signaling, and defense responses downstream of FLS2; upon PAMP recognition, first phosphorylated by FLS2 and SIK1 prior to being monoubiquitinated by ATL44/RHA3A and ATL45/RHA3B at the plasma membrane, then internalized dynamically into endocytic compartments together with FLS2. Acts additively with PBL1 in PTI defenses. Acts as a positive regulator of the PAMP flg22-induced increase of cytosolic calcium. Upon flg22 perception, phosphorylates and activates the calcium-permeable channel OSCA1.3, promoting stomatal closure. Phosphorylates the NADPH oxidase RBOHD at specific sites in a calcium-independent manner to enhance reactive oxygen species (ROS) generation upon flg22 perception. ROS production in response to flg22 controls stomatal movement and restriction of bacterial entry into leaf tissues. Seems not required for flg22-induced MAPK activation. Required for Pep1-induced defenses. Pep1 is an endogenous elicitor that potentiates PAMP-inducible plant responses. In association with PEPR1, acts downstream of the canonical ethylene signaling cascade to regulate ethylene responses. Involved in ethylene signaling. Destabilizes EIN3, the key transcription activator in ethylene signaling, and represses EIN3-dependent transcription. Acts as a negative regulator in brassinosteroid (BR) signaling. Functions in BR signaling by direct interaction with the BR receptor BRI1 cytosolic kinase domain. Required during SCOOP small peptides (e.g. SCOOP10 and SCOOP12) perception and signaling; receptor-like cytosolic kinases (RLCK) activated by BAK1/SERK3 and SERK4 coreceptors when associated with MIK2 upon the perception of SCOOP peptides. (Microbial infection) Xanthomonas campestris effector AvrAC/XopAC-mediated uridylylation prevents activation by phosphorylation at the same residues, thus affecting immune responses and reducing defense responses toward X.campestris, mediating avrAC/XopAC virulence functions. This Arabidopsis thaliana (Mouse-ear cress) protein is Serine/threonine-protein kinase BIK1.